Here is a 2078-residue protein sequence, read N- to C-terminus: Autophagy-related protein 2 homolog B (2078 aa).

One can recognise a Chorein N-terminal domain in the interval 13-108; sequence ACRYLLQRYL…EMVFRPRPRP (96 aa). A phosphoserine mark is found at serine 255 and serine 379. The tract at residues 473–495 is disordered; the sequence is GSTFPSNLVHPTPLQKTSLPSRS. Polar residues predominate over residues 486–495; it reads LQKTSLPSRS. Residues serine 497, serine 840, serine 886, serine 899, and serine 1008 each carry the phosphoserine modification. The segment at 868-888 is disordered; the sequence is EEEENDGHYQEEEEGGAHSLK. The segment covering 873 to 888 has biased composition (basic and acidic residues); that stretch reads DGHYQEEEEGGAHSLK. Position 1012 is a phosphotyrosine (tyrosine 1012). A phosphoserine mark is found at serine 1016 and serine 1018. Threonine 1022 bears the Phosphothreonine mark. Positions 1375 to 1405 are disordered; sequence ADMKPGAFQRRSKVDSSGRSSSRGPVLPEAD. Serine 1526 carries the post-translational modification Phosphoserine.

It belongs to the ATG2 family. Interacts with WDR45/WIPI4.

Its subcellular location is the preautophagosomal structure membrane. It is found in the lipid droplet. The protein resides in the endoplasmic reticulum membrane. It catalyses the reaction a 1,2-diacyl-sn-glycero-3-phospho-L-serine(in) = a 1,2-diacyl-sn-glycero-3-phospho-L-serine(out). The catalysed reaction is a 1,2-diacyl-sn-glycero-3-phosphoethanolamine(in) = a 1,2-diacyl-sn-glycero-3-phosphoethanolamine(out). In terms of biological role, lipid transfer protein required for both autophagosome formation and regulation of lipid droplet morphology and dispersion. Tethers the edge of the isolation membrane (IM) to the endoplasmic reticulum (ER) and mediates direct lipid transfer from ER to IM for IM expansion. Binds to the ER exit site (ERES), which is the membrane source for autophagosome formation, and extracts phospholipids from the membrane source and transfers them to ATG9 (ATG9A or ATG9B) to the IM for membrane expansion. Lipid transfer activity is enhanced by WDR45/WIPI4, which promotes ATG2B-association with phosphatidylinositol 3-monophosphate (PI3P)-containing membranes. This chain is Autophagy-related protein 2 homolog B, found in Homo sapiens (Human).